Here is a 122-residue protein sequence, read N- to C-terminus: Large ribosomal subunit protein uL14 (122 aa).

The protein belongs to the universal ribosomal protein uL14 family. Part of the 50S ribosomal subunit. Forms a cluster with proteins L3 and L19. In the 70S ribosome, L14 and L19 interact and together make contacts with the 16S rRNA in bridges B5 and B8.

Functionally, binds to 23S rRNA. Forms part of two intersubunit bridges in the 70S ribosome. This Francisella tularensis subsp. holarctica (strain LVS) protein is Large ribosomal subunit protein uL14.